The chain runs to 148 residues: UPF0178 protein Pcar_2632 (148 aa).

It belongs to the UPF0178 family.

This is UPF0178 protein Pcar_2632 from Syntrophotalea carbinolica (strain DSM 2380 / NBRC 103641 / GraBd1) (Pelobacter carbinolicus).